The primary structure comprises 959 residues: Ribonucleoside-diphosphate reductase large subunit (959 aa).

Residues T68, S83 to C84, and G112 each bind substrate. C84 and C626 are oxidised to a cystine. N270 acts as the Proton acceptor in catalysis. In terms of domain architecture, DOD-type homing endonuclease spans L378 to V508. The Cysteine radical intermediate role is filled by C611. The active-site Proton acceptor is E613. Substrate is bound at residue P751–S755.

This sequence belongs to the ribonucleoside diphosphate reductase large chain family. As to quaternary structure, heterotetramer composed of a homodimer of the large subunit (R1) and a homodimer of the small subunit (R2). Larger multisubunit protein complex are also active, composed of (R1)n(R2)n.

The enzyme catalyses a 2'-deoxyribonucleoside 5'-diphosphate + [thioredoxin]-disulfide + H2O = a ribonucleoside 5'-diphosphate + [thioredoxin]-dithiol. Under complex allosteric control mediated by deoxynucleoside triphosphates and ATP binding. The type of nucleotide bound at the specificity site determines substrate preference. It seems probable that ATP makes the enzyme reduce CDP and UDP, dGTP favors ADP reduction and dTTP favors GDP reduction. Ribonucleoside-diphosphate reductase holoenzyme provides the precursors necessary for viral DNA synthesis. Allows virus growth in non-dividing cells. Catalyzes the biosynthesis of deoxyribonucleotides from the corresponding ribonucleotides. The protein is Ribonucleoside-diphosphate reductase large subunit of Acheta domesticus (House cricket).